Here is a 236-residue protein sequence, read N- to C-terminus: uncharacterized protein (236 aa).

Residues 3–208 (ILGLTGSIAT…PSYFFTLLCL (206 aa)) form the DPCK domain. Position 8 to 15 (8 to 15 (GSIATGKS)) interacts with ATP. Ser-82 and Ser-86 each carry phosphoserine.

Belongs to the CoaE family.

The protein localises to the cytoplasm. This is an uncharacterized protein from Schizosaccharomyces pombe (strain 972 / ATCC 24843) (Fission yeast).